A 90-amino-acid polypeptide reads, in one-letter code: U7-theraphotoxin-Hhn1a 2 (90 aa).

Residues 1 to 19 (MKIAIFTVVLALAVFAVLS) form the signal peptide. The propeptide occupies 20–50 (FGWEANEKALSEEFTELIHEKEAASETEARE). 3 cysteine pairs are disulfide-bonded: Cys-51–Cys-65, Cys-58–Cys-70, and Cys-64–Cys-81.

Belongs to the neurotoxin 10 (Hwtx-1) family. 13 (Hntx-13) subfamily. Expressed by the venom gland.

It localises to the secreted. In terms of biological role, ion channel inhibitor. The polypeptide is U7-theraphotoxin-Hhn1a 2 (Cyriopagopus hainanus (Chinese bird spider)).